A 235-amino-acid polypeptide reads, in one-letter code: 2,3-bisphosphoglycerate-dependent phosphoglycerate mutase 1 (235 aa).

Residues 8–15 (RHGESVAN), 21–22 (TG), Arg60, 87–90 (ERHY), Lys98, and 114–115 (RR) contribute to the substrate site. His9 acts as the Tele-phosphohistidine intermediate in catalysis. Glu87 acts as the Proton donor/acceptor in catalysis.

It belongs to the phosphoglycerate mutase family. BPG-dependent PGAM subfamily.

It catalyses the reaction (2R)-2-phosphoglycerate = (2R)-3-phosphoglycerate. Its pathway is carbohydrate degradation; glycolysis; pyruvate from D-glyceraldehyde 3-phosphate: step 3/5. In terms of biological role, catalyzes the interconversion of 2-phosphoglycerate and 3-phosphoglycerate. In Latilactobacillus sakei subsp. sakei (strain 23K) (Lactobacillus sakei subsp. sakei), this protein is 2,3-bisphosphoglycerate-dependent phosphoglycerate mutase 1.